Reading from the N-terminus, the 175-residue chain is RRDQYPRDRDQYSMIGRDRDKYSMIGRDRDQYNMYGRDYSKSRQIAKAVTAVTAGGSLLVLSSLTLVGTVIALTVATPLLVIFSPILVPALITVALLITGFLSSGGFGIAAITVFSWIYKYATGEHPQGSDKLDSARMKLGGKVQDMKDRAQYYGQQQTGGEDDRDRTRGTQHTT.

The tract at residues 1 to 47 is polar; the sequence is RRDQYPRDRDQYSMIGRDRDKYSMIGRDRDQYNMYGRDYSKSRQIAK. Repeats lie at residues 17–26 and 27–36; these read RDRDKYSMIG and RDRDQYNMYG. The tract at residues 48–119 is hydrophobic; it reads AVTAVTAGGS…AAITVFSWIY (72 aa). 3 helical membrane passes run 56 to 76, 78 to 98, and 99 to 119; these read GSLL…LTVA, PLLV…ALLI, and TGFL…SWIY. The interval 151 to 175 is disordered; the sequence is AQYYGQQQTGGEDDRDRTRGTQHTT.

The protein belongs to the oleosin family.

The protein resides in the lipid droplet. It is found in the membrane. Functionally, may have a structural role to stabilize the lipid body during desiccation of the seed by preventing coalescence of the oil. Probably interacts with both lipid and phospholipid moieties of lipid bodies. May also provide recognition signals for specific lipase anchorage in lipolysis during seedling growth. This is Major oleosin NAP-II from Brassica napus (Rape).